A 946-amino-acid polypeptide reads, in one-letter code: Inter-alpha-trypsin inhibitor heavy chain H2 (946 aa).

The N-terminal stretch at 1–18 (MQRPVCLLIWLFLLEAQA) is a signal peptide. A propeptide spanning residues 19–54 (FEIPINGNSEFAEYSDLVELAPDKLPFVQENGRHQR) is cleaved from the precursor. The VIT domain occupies 56–185 (LPEESGEETD…KVQFELHYQE (130 aa)). The residue at position 60 (Ser-60) is a Phosphoserine. N-linked (GlcNAc...) asparagine glycosylation is found at Asn-118 and Asn-263. 4-carboxyglutamate is present on residues Glu-282 and Glu-283. Positions 308–468 (PKNILFVIDV…YDFLKRLSNE (161 aa)) constitute a VWFA domain. The N-linked (GlcNAc...) asparagine glycan is linked to Asn-445. The residue at position 466 (Ser-466) is a Phosphoserine. Asp-702 is modified (aspartate 1-(chondroitin 4-sulfate)-ester). The propeptide occupies 703–946 (PHFIIYLPKS…PQLYSFLKRP (244 aa)). Ser-886 is subject to Phosphoserine.

This sequence belongs to the ITIH family. I-alpha-I plasma protease inhibitors are assembled from one or two heavy chains (HC) and one light chain, bikunin. Inter-alpha-inhibitor (I-alpha-I) is composed of ITIH1/HC1, ITIH2/HC2 and bikunin. Post-translationally, heavy chains are linked to bikunin via chondroitin 4-sulfate esterified to the alpha-carboxyl of the C-terminal aspartate after propeptide cleavage. In terms of processing, phosphorylated by FAM20C in the extracellular medium. Expressed in both liver and brain.

It is found in the secreted. Functionally, may act as a carrier of hyaluronan in serum or as a binding protein between hyaluronan and other matrix protein, including those on cell surfaces in tissues to regulate the localization, synthesis and degradation of hyaluronan which are essential to cells undergoing biological processes. The chain is Inter-alpha-trypsin inhibitor heavy chain H2 (Itih2) from Mus musculus (Mouse).